The following is a 127-amino-acid chain: Membrane-bound lysozyme inhibitor of C-type lysozyme (127 aa).

The signal sequence occupies residues 1-18 (MKKALWLLLAAVPVVLVA). A lipid anchor (N-palmitoyl cysteine) is attached at cysteine 19. Cysteine 19 carries the S-diacylglycerol cysteine lipid modification. Cysteine 51 and cysteine 124 are joined by a disulfide.

It belongs to the MliC family. Type 2 subfamily. As to quaternary structure, homodimer.

It localises to the cell outer membrane. Its function is as follows. Specifically inhibits C-type lysozymes. The sequence is that of Membrane-bound lysozyme inhibitor of C-type lysozyme from Pseudomonas aeruginosa (strain ATCC 15692 / DSM 22644 / CIP 104116 / JCM 14847 / LMG 12228 / 1C / PRS 101 / PAO1).